A 395-amino-acid polypeptide reads, in one-letter code: Multidrug resistance protein MdtL (395 aa).

The Cytoplasmic segment spans residues 1-3; sequence MKR. The chain crosses the membrane as a helical span at residues 4-24; it reads FLLCSFALVLLYPAGIDMYLV. The Periplasmic segment spans residues 25–41; sequence GLPRIAADLNASEAQLH. Residues 42–62 traverse the membrane as a helical segment; it reads IAFSVYLAGMATAMLFAGKIA. Over 63–68 the chain is Cytoplasmic; it reads DQSGRK. The chain crosses the membrane as a helical span at residues 69–89; that stretch reads PVAIVGALVFMMASLLCSRAS. At 90-92 the chain is on the periplasmic side; sequence EGS. A helical membrane pass occupies residues 93–113; it reads LFLSGRFLQGVGAGGCYVVAF. At 114-130 the chain is on the cytoplasmic side; the sequence is AILRDTLDEHRRAKVLS. A helical membrane pass occupies residues 131–151; sequence LLNGITCIVPVLAPVVGHLIM. The Periplasmic segment spans residues 152–157; sequence LRFPWQ. The chain crosses the membrane as a helical span at residues 158 to 178; sequence SLFYTMSAMGIIVGLLSLFIL. Residues 179–216 are Cytoplasmic-facing; the sequence is RETRPVRLAPRDLSRSSPAAESLINRFFVSRLAITTLS. The helical transmembrane segment at 217–237 threads the bilayer; the sequence is VSVILTFVNASPVLLMEVMGF. Topologically, residues 238 to 246 are periplasmic; the sequence is SRGDYAITM. Residues 247-267 form a helical membrane-spanning segment; that stretch reads ALTAGVSMVVSFSTPFALGLF. Residues 268–270 lie on the Cytoplasmic side of the membrane; that stretch reads KPR. Residues 271 to 291 traverse the membrane as a helical segment; it reads TLMLVSQGLFLTAGVTLSLAH. Topologically, residues 292–294 are periplasmic; it reads TNT. The helical transmembrane segment at 295–315 threads the bilayer; it reads VTLFGLTLICAGFSVGFGVAM. The Cytoplasmic segment spans residues 316–327; that stretch reads SQALGPFSLRAG. A helical membrane pass occupies residues 328 to 350; sequence VASSTLGIAQVCGSSLWIWLAAI. Topologically, residues 351 to 354 are periplasmic; that stretch reads LGIS. Residues 355–377 form a helical membrane-spanning segment; that stretch reads AMNMLIGILIGCSIVSILLIFSV. Residues 378–395 are Cytoplasmic-facing; the sequence is TPNRSVAEHEEIPYQSRP.

Belongs to the major facilitator superfamily. DHA1 family. MdtL (TC 2.A.1.2.22) subfamily.

Its subcellular location is the cell inner membrane. This Salmonella typhimurium (strain LT2 / SGSC1412 / ATCC 700720) protein is Multidrug resistance protein MdtL (mdtL).